Here is a 115-residue protein sequence, read N- to C-terminus: Transcriptional regulator protein FixT (115 aa).

Interacts directly with FixL.

Prevents transcription of the intermediate key regulatory genes nifA and fixK by counteracting the activity of the FixLJ two-component system. Acts as an inhibitor of the sensor hemoprotein kinase fixL, preventing the production or the accumulation of its phosphorylated form. This chain is Transcriptional regulator protein FixT (fixT), found in Rhizobium meliloti (strain 1021) (Ensifer meliloti).